The sequence spans 431 residues: Putative serine/threonine-protein kinase A (431 aa).

The 260-residue stretch at 20 to 279 (YLNKGIVGLG…VREIFQIPYI (260 aa)) folds into the Protein kinase domain. Residues 26–34 (VGLGSYGEA) and Lys49 each bind ATP. Catalysis depends on Asp147, which acts as the Proton acceptor. Positions 331–429 (DVTHRGHVNK…WVHAIQRGIG (99 aa)) constitute a PH domain.

The protein belongs to the protein kinase superfamily. Ser/Thr protein kinase family.

It catalyses the reaction L-seryl-[protein] + ATP = O-phospho-L-seryl-[protein] + ADP + H(+). It carries out the reaction L-threonyl-[protein] + ATP = O-phospho-L-threonyl-[protein] + ADP + H(+). The chain is Putative serine/threonine-protein kinase A (NRKA) from Trypanosoma brucei brucei.